A 398-amino-acid chain; its full sequence is MENETGSELNQTQLQPRAVVALEYQVVTILLVLIICGLGIVGNIMVVLVVMRTKHMRTPTNCYLVSLAVADLMVLVAAGLPNITDSIYGSWVYGYVGCLCITYLQYLGINASSCSITAFTIERYIAICHPIKAQFLCTFSRAKKIIIFVWAFTSIYCMLWFFLLDLNISTYKDAIVVSCGYKISRNYYSPIYLMDFGVFYVVPMILATVLYGFIARILFLSPIPSDPKENSNTWKNDSTHQNKNLNSKTSNRYFNSTVSSRKQVTKMLAVVVILFALLWMPYRTLVVVNSFLSSPFQENWFLLFCRICIYLNSAINPVIYNLMSQKFRAAFRKLCNCKQKPVEKPANYSVALNYSVIKESDHFSTELDDITVTDTYLSATKVSFDDTCLASEVTFSQS.

The Extracellular segment spans residues 1 to 28 (MENETGSELNQTQLQPRAVVALEYQVVT). Residues N3 and N10 are each glycosylated (N-linked (GlcNAc...) asparagine). Residues 29–51 (ILLVLIICGLGIVGNIMVVLVVM) traverse the membrane as a helical segment. Over 52–61 (RTKHMRTPTN) the chain is Cytoplasmic. Residues 62 to 83 (CYLVSLAVADLMVLVAAGLPNI) traverse the membrane as a helical segment. At 84–99 (TDSIYGSWVYGYVGCL) the chain is on the extracellular side. A disulfide bridge links C98 with C179. The chain crosses the membrane as a helical span at residues 100–121 (CITYLQYLGINASSCSITAFTI). The Cytoplasmic portion of the chain corresponds to 122–144 (ERYIAICHPIKAQFLCTFSRAKK). The helical transmembrane segment at 145-168 (IIIFVWAFTSIYCMLWFFLLDLNI) threads the bilayer. Residues 169-193 (STYKDAIVVSCGYKISRNYYSPIYL) lie on the Extracellular side of the membrane. A helical transmembrane segment spans residues 194–215 (MDFGVFYVVPMILATVLYGFIA). At 216 to 266 (RILFLSPIPSDPKENSNTWKNDSTHQNKNLNSKTSNRYFNSTVSSRKQVTK) the chain is on the cytoplasmic side. Residues 267-288 (MLAVVVILFALLWMPYRTLVVV) traverse the membrane as a helical segment. Over 289–296 (NSFLSSPF) the chain is Extracellular. A helical transmembrane segment spans residues 297–319 (QENWFLLFCRICIYLNSAINPVI). The Cytoplasmic segment spans residues 320 to 398 (YNLMSQKFRA…LASEVTFSQS (79 aa)).

This sequence belongs to the G-protein coupled receptor 1 family.

It is found in the cell membrane. Functionally, receptor for thyrotropin-releasing hormone (TRH). Upon ligand binding, this G-protein-coupled receptor triggers activation of the phosphatidylinositol (IP3)-calcium-protein kinase C (PKC) pathway. The sequence is that of Thyrotropin-releasing hormone receptor (TRHR) from Ovis aries (Sheep).